Reading from the N-terminus, the 344-residue chain is Methionine import ATP-binding protein MetN 1 (344 aa).

The 240-residue stretch at 2 to 241 (IELRNLSQRF…PHHEVTRALI (240 aa)) folds into the ABC transporter domain. Residue 38-45 (GRSGAGKS) coordinates ATP.

Belongs to the ABC transporter superfamily. Methionine importer (TC 3.A.1.24) family. In terms of assembly, the complex is composed of two ATP-binding proteins (MetN), two transmembrane proteins (MetI) and a solute-binding protein (MetQ).

The protein localises to the cell inner membrane. The enzyme catalyses L-methionine(out) + ATP + H2O = L-methionine(in) + ADP + phosphate + H(+). It carries out the reaction D-methionine(out) + ATP + H2O = D-methionine(in) + ADP + phosphate + H(+). Part of the ABC transporter complex MetNIQ involved in methionine import. Responsible for energy coupling to the transport system. The protein is Methionine import ATP-binding protein MetN 1 of Burkholderia ambifaria (strain ATCC BAA-244 / DSM 16087 / CCUG 44356 / LMG 19182 / AMMD) (Burkholderia cepacia (strain AMMD)).